Reading from the N-terminus, the 265-residue chain is Phosphate import ATP-binding protein PstB 2 (265 aa).

One can recognise an ABC transporter domain in the interval 13-260 (FRTENLNVYY…PTKQATRDYV (248 aa)). ATP is bound at residue 45 to 52 (GPSGCGKS).

This sequence belongs to the ABC transporter superfamily. Phosphate importer (TC 3.A.1.7) family. As to quaternary structure, the complex is composed of two ATP-binding proteins (PstB), two transmembrane proteins (PstC and PstA) and a solute-binding protein (PstS).

The protein resides in the cell inner membrane. It catalyses the reaction phosphate(out) + ATP + H2O = ADP + 2 phosphate(in) + H(+). Its function is as follows. Part of the ABC transporter complex PstSACB involved in phosphate import. Responsible for energy coupling to the transport system. This Synechococcus sp. (strain JA-3-3Ab) (Cyanobacteria bacterium Yellowstone A-Prime) protein is Phosphate import ATP-binding protein PstB 2.